The primary structure comprises 329 residues: Cytoplasmic phosphatidylinositol transfer protein 1 (329 aa).

The interval 267–329 (SHGGYSSAPS…GNKPSLAKPE (63 aa)) is disordered.

The protein belongs to the PtdIns transfer protein family. PI transfer class IIB subfamily.

The protein resides in the cytoplasm. It catalyses the reaction a 1,2-diacyl-sn-glycero-3-phospho-(1D-myo-inositol)(in) = a 1,2-diacyl-sn-glycero-3-phospho-(1D-myo-inositol)(out). The catalysed reaction is a 1,2-diacyl-sn-glycero-3-phosphate(in) = a 1,2-diacyl-sn-glycero-3-phosphate(out). Functionally, catalyzes the transfer of phosphatidylinositol (PI) and phosphatidic acid (PA) between membranes. Binds PA derived from the phospholipase D signaling pathway and among the cellular PA species, preferably binds to the C16:0/16:1 and C16:1/18:1 PA species. This is Cytoplasmic phosphatidylinositol transfer protein 1 (pitpnc1) from Xenopus tropicalis (Western clawed frog).